A 473-amino-acid chain; its full sequence is MRIYNTATRQVEEFTTYTPGLARGYVCGITPYDHVHVGHGRVYVFFDMFRRYLESLGYEVRLVVNFTDIDDKIIAKAREEFGPEAYKRWREVPERYIAEFFEVSKRLFIKPAYAYPRVTENVDDMVKWISALVEKGFAYVAPDGSVYFEVGKVPNYGVLSRQRIEELIAGARVEPEPGKRNPLDFALWKSWSPGEPWWNSPWCPGRPGWHLECVVMSTKHLGVPFDFHGGGADLIFPHHENEIAIAKAYFGVDNFAKYWIHVGYLTVRGEKMSKSLGNVITLREVLSKYSGEALRLAYAMSHYRKPMEFSFELLDQAEDIVKTLYTAYDELSQAVADAGDADRERVDIGNFKAAFYSALEDDFSTPEAVQQLYAAAKYIISTVLHKVDKLSKNTVLAILADYVKMADVIGVLERREVAKEVEEAVKALVEVRARLRSERLYQLADYVRERAKALGAELHDFGPRTYYTIRRRG.

Residue Cys27 coordinates Zn(2+). The 'HIGH' region motif lies at 29 to 39 (ITPYDHVHVGH). Positions 213, 238, and 242 each coordinate Zn(2+). Residues 271–275 (KMSKS) carry the 'KMSKS' region motif. Lys274 provides a ligand contact to ATP.

The protein belongs to the class-I aminoacyl-tRNA synthetase family. The cofactor is Zn(2+).

It localises to the cytoplasm. The catalysed reaction is tRNA(Cys) + L-cysteine + ATP = L-cysteinyl-tRNA(Cys) + AMP + diphosphate. This chain is Cysteine--tRNA ligase, found in Pyrobaculum calidifontis (strain DSM 21063 / JCM 11548 / VA1).